The primary structure comprises 346 residues: S-adenosylmethionine:tRNA ribosyltransferase-isomerase (346 aa).

The protein belongs to the QueA family. As to quaternary structure, monomer.

The protein localises to the cytoplasm. It carries out the reaction 7-aminomethyl-7-carbaguanosine(34) in tRNA + S-adenosyl-L-methionine = epoxyqueuosine(34) in tRNA + adenine + L-methionine + 2 H(+). The protein operates within tRNA modification; tRNA-queuosine biosynthesis. Functionally, transfers and isomerizes the ribose moiety from AdoMet to the 7-aminomethyl group of 7-deazaguanine (preQ1-tRNA) to give epoxyqueuosine (oQ-tRNA). The protein is S-adenosylmethionine:tRNA ribosyltransferase-isomerase of Lactococcus lactis subsp. cremoris (strain MG1363).